Here is a 492-residue protein sequence, read N- to C-terminus: 3-octaprenyl-4-hydroxybenzoate carboxy-lyase (492 aa).

Asn177 is a binding site for Mn(2+). Prenylated FMN is bound by residues Ile180–Arg182, Arg194–Leu196, and Arg199–Gly200. Glu243 provides a ligand contact to Mn(2+). The active-site Proton donor is Asp292.

Belongs to the UbiD family. As to quaternary structure, homohexamer. Prenylated FMN serves as cofactor. Mn(2+) is required as a cofactor.

The protein resides in the cell membrane. It catalyses the reaction a 4-hydroxy-3-(all-trans-polyprenyl)benzoate + H(+) = a 2-(all-trans-polyprenyl)phenol + CO2. It participates in cofactor biosynthesis; ubiquinone biosynthesis. Functionally, catalyzes the decarboxylation of 3-octaprenyl-4-hydroxy benzoate to 2-octaprenylphenol, an intermediate step in ubiquinone biosynthesis. This Neisseria meningitidis serogroup B (strain ATCC BAA-335 / MC58) protein is 3-octaprenyl-4-hydroxybenzoate carboxy-lyase.